Here is a 198-residue protein sequence, read N- to C-terminus: dTTP/UTP pyrophosphatase (198 aa).

Asp-76 acts as the Proton acceptor in catalysis.

Belongs to the Maf family. YhdE subfamily. A divalent metal cation is required as a cofactor.

The protein resides in the cytoplasm. It catalyses the reaction dTTP + H2O = dTMP + diphosphate + H(+). It carries out the reaction UTP + H2O = UMP + diphosphate + H(+). Nucleoside triphosphate pyrophosphatase that hydrolyzes dTTP and UTP. May have a dual role in cell division arrest and in preventing the incorporation of modified nucleotides into cellular nucleic acids. The sequence is that of dTTP/UTP pyrophosphatase from Shewanella denitrificans (strain OS217 / ATCC BAA-1090 / DSM 15013).